A 231-amino-acid chain; its full sequence is Maleylacetoacetate isomerase maiA (231 aa).

A GST N-terminal domain is found at 7–93 (PKVTLYTYFR…YLEEITPASS (87 aa)). The GST C-terminal domain maps to 102–224 (NPEARAVVRT…HWRTQPDTPE (123 aa)).

Belongs to the GST superfamily. Zeta family.

The enzyme catalyses 4-maleylacetoacetate = 4-fumarylacetoacetate. It participates in amino-acid degradation; L-phenylalanine degradation; acetoacetate and fumarate from L-phenylalanine: step 5/6. Maleylacetoacetate isomerase; part of the L-tyrosine degradation gene cluster that mediates the biosynthesis of the brownish pigment pyomelanin as an alternative melanin. The 4-hydroxyphenylpyruvate dioxygenase hppD catalyzes the conversion of 4-hydroxyphenylpyruvate to homogentisic acid (HGA). The protein hmgX is crucial for this conversion and thus, probably functions as an accessory factor to mediate specific activity of hppD. The homogentisate 1,2-dioxygenase hmgA is then involved in the cleavage of the aromatic ring of HGA and its conversion to 4-maleylacetoacetate. When hmgA activity is lowered by the cell wall integrity (CWI) signaling pathway, HGA accumulates and leads to the production of pyomelanin through benzoquinone acetic acid after oxidation and polymerization. On the opposite, in non-stress conditions, both hppD and hmgA activities are balanced and HGA is degraded into 4-maleylacetoacetate. 4-maleylacetoacetate is further converted to 4-fumarylacetoacetate by the maleylacetoacetate isomerase maiA, which is degraded into fumarate and acetoacetate by the fumarylacetoacetase fahA. The protein is Maleylacetoacetate isomerase maiA of Aspergillus fumigatus (strain ATCC MYA-4609 / CBS 101355 / FGSC A1100 / Af293) (Neosartorya fumigata).